The chain runs to 106 residues: ATP-dependent Clp protease adapter protein ClpS (106 aa).

This sequence belongs to the ClpS family. In terms of assembly, binds to the N-terminal domain of the chaperone ClpA.

Its function is as follows. Involved in the modulation of the specificity of the ClpAP-mediated ATP-dependent protein degradation. This chain is ATP-dependent Clp protease adapter protein ClpS, found in Escherichia coli O139:H28 (strain E24377A / ETEC).